Reading from the N-terminus, the 391-residue chain is S-adenosylmethionine synthase 1 (391 aa).

Glutamate 9 is a Mg(2+) binding site. Residue histidine 15 participates in ATP binding. Glutamate 43 is a binding site for K(+). The L-methionine site is built by glutamate 56 and glutamine 99. ATP is bound by residues 167–169, 235–238, aspartate 246, 252–253, alanine 269, lysine 273, and lysine 277; these read DGK, SGRF, and RK. Position 246 (aspartate 246) interacts with L-methionine. Lysine 277 contributes to the L-methionine binding site.

This sequence belongs to the AdoMet synthase family. Homotetramer. Mn(2+) is required as a cofactor. It depends on Mg(2+) as a cofactor. Requires Co(2+) as cofactor. The cofactor is K(+).

It localises to the cytoplasm. It carries out the reaction L-methionine + ATP + H2O = S-adenosyl-L-methionine + phosphate + diphosphate. The protein operates within amino-acid biosynthesis; S-adenosyl-L-methionine biosynthesis; S-adenosyl-L-methionine from L-methionine: step 1/1. Its function is as follows. Catalyzes the formation of S-adenosylmethionine from methionine and ATP. The reaction comprises two steps that are both catalyzed by the same enzyme: formation of S-adenosylmethionine (AdoMet) and triphosphate, and subsequent hydrolysis of the triphosphate. This Vitis vinifera (Grape) protein is S-adenosylmethionine synthase 1 (METK1).